Here is a 326-residue protein sequence, read N- to C-terminus: Beta-ketoacyl-[acyl-carrier-protein] synthase III (326 aa).

Residues C115 and H253 contribute to the active site. The ACP-binding stretch occupies residues 254–258 (QANKR). N283 is a catalytic residue.

This sequence belongs to the thiolase-like superfamily. FabH family. As to quaternary structure, homodimer.

Its subcellular location is the cytoplasm. It carries out the reaction malonyl-[ACP] + acetyl-CoA + H(+) = 3-oxobutanoyl-[ACP] + CO2 + CoA. It functions in the pathway lipid metabolism; fatty acid biosynthesis. Catalyzes the condensation reaction of fatty acid synthesis by the addition to an acyl acceptor of two carbons from malonyl-ACP. Catalyzes the first condensation reaction which initiates fatty acid synthesis and may therefore play a role in governing the total rate of fatty acid production. Possesses both acetoacetyl-ACP synthase and acetyl transacylase activities. Its substrate specificity determines the biosynthesis of branched-chain and/or straight-chain of fatty acids. The chain is Beta-ketoacyl-[acyl-carrier-protein] synthase III from Bradyrhizobium diazoefficiens (strain JCM 10833 / BCRC 13528 / IAM 13628 / NBRC 14792 / USDA 110).